Consider the following 215-residue polypeptide: Leucyl/phenylalanyl-tRNA--protein transferase (215 aa).

The protein belongs to the L/F-transferase family.

Its subcellular location is the cytoplasm. The enzyme catalyses N-terminal L-lysyl-[protein] + L-leucyl-tRNA(Leu) = N-terminal L-leucyl-L-lysyl-[protein] + tRNA(Leu) + H(+). It carries out the reaction N-terminal L-arginyl-[protein] + L-leucyl-tRNA(Leu) = N-terminal L-leucyl-L-arginyl-[protein] + tRNA(Leu) + H(+). It catalyses the reaction L-phenylalanyl-tRNA(Phe) + an N-terminal L-alpha-aminoacyl-[protein] = an N-terminal L-phenylalanyl-L-alpha-aminoacyl-[protein] + tRNA(Phe). In terms of biological role, functions in the N-end rule pathway of protein degradation where it conjugates Leu, Phe and, less efficiently, Met from aminoacyl-tRNAs to the N-termini of proteins containing an N-terminal arginine or lysine. The sequence is that of Leucyl/phenylalanyl-tRNA--protein transferase from Campylobacter jejuni subsp. jejuni serotype O:2 (strain ATCC 700819 / NCTC 11168).